A 265-amino-acid chain; its full sequence is MKIAIAGASGRMGRMLIEAVLNDADAQLVGALDRAGSPFLGQDAGAFVGKDTGIKLTDDLDAVFAQADYLIDFTRPEGTIAHIEAALRHDVKLVIGTTGFTAEQKAQLQAAAAKLGIVFAANMSVGVNVTLKLLEFAAQHFSHGYDIEIIEAHHRHKVDAPSGTALMMGEAVAGALGRSLDDCAVYGRHGVTGERDPSSIGFAAVRGGDIVGDHTVLFAGIGERIEITHKSSSRVSYAQGALRAVRFLSARGAGLFDMQDVLGLR.

Residues 7–12 and D33 each bind NAD(+); that span reads GASGRM. R34 provides a ligand contact to NADP(+). NAD(+)-binding positions include 96–98 and 120–123; these read GTT and AANM. The active-site Proton donor/acceptor is the H153. Position 154 (H154) interacts with (S)-2,3,4,5-tetrahydrodipicolinate. The Proton donor role is filled by K157. Residue 163–164 coordinates (S)-2,3,4,5-tetrahydrodipicolinate; it reads GT.

Belongs to the DapB family.

It localises to the cytoplasm. The enzyme catalyses (S)-2,3,4,5-tetrahydrodipicolinate + NAD(+) + H2O = (2S,4S)-4-hydroxy-2,3,4,5-tetrahydrodipicolinate + NADH + H(+). It catalyses the reaction (S)-2,3,4,5-tetrahydrodipicolinate + NADP(+) + H2O = (2S,4S)-4-hydroxy-2,3,4,5-tetrahydrodipicolinate + NADPH + H(+). It functions in the pathway amino-acid biosynthesis; L-lysine biosynthesis via DAP pathway; (S)-tetrahydrodipicolinate from L-aspartate: step 4/4. In terms of biological role, catalyzes the conversion of 4-hydroxy-tetrahydrodipicolinate (HTPA) to tetrahydrodipicolinate. The protein is 4-hydroxy-tetrahydrodipicolinate reductase of Burkholderia vietnamiensis (strain G4 / LMG 22486) (Burkholderia cepacia (strain R1808)).